The chain runs to 367 residues: 3-isopropylmalate dehydrogenase (367 aa).

An NAD(+)-binding site is contributed by 75–88 (GPKWDGIERSKRPE). Substrate is bound by residues Arg-95, Arg-105, Arg-133, and Asp-230. Positions 230, 254, and 258 each coordinate Mg(2+). Residue 288 to 300 (GSAPDIAGQDIAN) participates in NAD(+) binding.

This sequence belongs to the isocitrate and isopropylmalate dehydrogenases family. LeuB type 1 subfamily. As to quaternary structure, homodimer. Mg(2+) is required as a cofactor. The cofactor is Mn(2+).

The protein resides in the cytoplasm. It catalyses the reaction (2R,3S)-3-isopropylmalate + NAD(+) = 4-methyl-2-oxopentanoate + CO2 + NADH. Its pathway is amino-acid biosynthesis; L-leucine biosynthesis; L-leucine from 3-methyl-2-oxobutanoate: step 3/4. Functionally, catalyzes the oxidation of 3-carboxy-2-hydroxy-4-methylpentanoate (3-isopropylmalate) to 3-carboxy-4-methyl-2-oxopentanoate. The product decarboxylates to 4-methyl-2 oxopentanoate. The chain is 3-isopropylmalate dehydrogenase from Psychrobacter arcticus (strain DSM 17307 / VKM B-2377 / 273-4).